Consider the following 617-residue polypeptide: Probable translation initiation factor IF-2 (617 aa).

The tr-type G domain maps to 14–231; that stretch reads LRQPIVVVLG…VLAGLTQTYL (218 aa). Residues 23–30 are G1; sequence GHVDHGKT. 23-30 contacts GTP; it reads GHVDHGKT. Residues 48-52 are G2; it reads GITQH. Positions 87 to 90 are G3; it reads DTPG. Residues 87 to 91 and 141 to 144 each bind GTP; these read DTPGH and NKID. A G4 region spans residues 141–144; it reads NKID. The G5 stretch occupies residues 209–211; that stretch reads SAR.

It belongs to the TRAFAC class translation factor GTPase superfamily. Classic translation factor GTPase family. IF-2 subfamily.

Function in general translation initiation by promoting the binding of the formylmethionine-tRNA to ribosomes. Seems to function along with eIF-2. The polypeptide is Probable translation initiation factor IF-2 (infB) (Aeropyrum pernix (strain ATCC 700893 / DSM 11879 / JCM 9820 / NBRC 100138 / K1)).